We begin with the raw amino-acid sequence, 289 residues long: Coiled-coil domain-containing protein 137 (289 aa).

3 disordered regions span residues 1 to 64 (MAGA…QEIP), 149 to 184 (EVQA…EKAA), and 204 to 225 (QPPE…GRRS). Residues 7–20 (GAAVSRVQAGPGSP) show a composition bias toward low complexity. At Ser-19 the chain carries Phosphoserine. Residues 155–197 (KEKSEQKKAKKAFQKRRLDKVRRKKEEKAADRLEQELLRDTVK) adopt a coiled-coil conformation. Residues 162 to 177 (KAKKAFQKRRLDKVRR) show a composition bias toward basic residues. Ser-233 is modified (phosphoserine). The stretch at 247 to 273 (RQRIVEEERERAVQAYRALKQRQQQLH) forms a coiled coil. The tract at residues 265–289 (LKQRQQQLHGERPHLTSRKKPEPQL) is disordered. A compositionally biased stretch (basic and acidic residues) spans 273 to 289 (HGERPHLTSRKKPEPQL).

It localises to the chromosome. The chain is Coiled-coil domain-containing protein 137 (CCDC137) from Homo sapiens (Human).